The chain runs to 722 residues: MEDKDELSRLRALFHTFDSKSSGRLEKGQFSALCAELKVSPSEAEDIFARLDSDKDSCITFEDFAMGFRGARGLHMPEGKKDVEQGEPPKSPSTPDKEEKPEETSSPAWEDFQRRLADEVNYIPRREQASILYQNINIVEPLLIQQYEHVIRNFVREIRLQSTEMENLAIAVKRAQDKAAIQLSELEEEMDQRIQAVEKRVKKEEKRKSEEALNDLKRQHESEVAELQVTIKKLKKLEEQSKNINLKEDVAVLRRRLHDLTMENQKLRKDLLEAQTSISFLQSELDALKSDYADQSLSSERDMDIIRGFTDERENLARQIEILQTANRKLHDSNDGLRSALENSLMKYNRSLRTINTSPGSTISRNSPKLTRCTSPYDRSPRSSYLDEDYDSLAVCDPMQRMNCEVDSLPESCIDSGLSTLRDSNEYDSEAEYRPPRIFHRSRFPHENYGGDASDTDVPEIRDEESYAPDNGGNLDWKPSNPVSRSSSGASSSRKCISALSANVTSAETVDKVHKYTHAEKAYKIVLAGDAAVGKSSFLMRLCKNEFRGNTSATLGVDFQMKTLVVDGEPTILQLWDTAGQERFRSIAKSYFRRADGVLLLYDVTCEKSFLNVREWIDMIEDATSEAIPIMMVGNKADLRQLMAEQGHICVSTNYGEKLSRTYGALFCETSAKEGSNIVEAVLHLAREVRKRCDNEDDRGSVTNLSAAISKKPAQMKNCCNV.

2 consecutive EF-hand domains span residues 5–39 (DELS…ELKV) and 39–74 (VSPS…ARGL). Basic and acidic residues predominate over residues 75–84 (HMPEGKKDVE). The interval 75-109 (HMPEGKKDVEQGEPPKSPSTPDKEEKPEETSSPAW) is disordered. Residues 156–335 (REIRLQSTEM…ANRKLHDSND (180 aa)) adopt a coiled-coil conformation. Over residues 355–374 (INTSPGSTISRNSPKLTRCT) the composition is skewed to polar residues. 2 disordered regions span residues 355 to 384 (INTS…PRSS) and 439 to 491 (FHRS…SGAS). The segment covering 480–491 (SNPVSRSSSGAS) has biased composition (low complexity). GTP-binding positions include 532–537 (AVGKSS), 635–638 (NKAD), and 672–673 (AK).

The protein belongs to the small GTPase superfamily. Rab family. Homodimer.

The protein resides in the cytoplasm. It localises to the perinuclear region. Its function is as follows. Binds predominantly GDP, and also GTP. In Xenopus tropicalis (Western clawed frog), this protein is Ras and EF-hand domain-containing protein (rasef).